We begin with the raw amino-acid sequence, 203 residues long: Large ribosomal subunit protein uL6 (203 aa).

This sequence belongs to the universal ribosomal protein uL6 family. Part of the 50S ribosomal subunit.

Its function is as follows. This protein binds to the 23S rRNA, and is important in its secondary structure. It is located near the subunit interface in the base of the L7/L12 stalk, and near the tRNA binding site of the peptidyltransferase center. This Hyphomonas neptunium (strain ATCC 15444) protein is Large ribosomal subunit protein uL6.